The primary structure comprises 330 residues: MTNPENTPMTTTNEGGKGLTEYEAKIYDRSIRLWGVDAQAKLRQSKVLFIGINGLMSEIIKNVVLAGVDSITLVDDHIITTSDLSAHLFINEDSVGKVISTESVFAISELNPLVTIDVYDKEIETMDDQFIKNYTMVVISDKNLNNVSKVNSLCRKNNVSFIFSHSFGLKGLFFSDLNEFKYFTKTTTEPPKTETHISIFKSFKESMGYDWSKTNSRTPLPFFALSTLYQFEEKHNRVPDNISDSDLSELKSIINSSIEKFNLKNTDSNKYFEETKDLLNKMNIEISPVCAIVGGIVGAEIIKIITQNMQVLNNFFFYDGVKGTGLVEQF.

This sequence belongs to the ubiquitin-activating E1 family. As to quaternary structure, heterodimer of sae1 and sae2. The complex binds sumo via sae2.

Its subcellular location is the nucleus. The protein operates within protein modification; protein sumoylation. Functionally, the dimeric enzyme acts as an E1 ligase for sumo. It mediates ATP-dependent activation of sumo and formation of a thioester with a conserved cysteine residue on sae2. In Dictyostelium discoideum (Social amoeba), this protein is SUMO-activating enzyme subunit 1 (sae1).